A 599-amino-acid chain; its full sequence is Aspartate--tRNA(Asp/Asn) ligase (599 aa).

Glutamate 173 is an L-aspartate binding site. The segment at 197-200 (QLYK) is aspartate. An L-aspartate-binding site is contributed by arginine 219. Residues 219–221 (RDE) and glutamine 228 contribute to the ATP site. Residue histidine 451 coordinates L-aspartate. Residue glutamate 484 coordinates ATP. Arginine 491 serves as a coordination point for L-aspartate. Residue 536–539 (GLDR) coordinates ATP.

It belongs to the class-II aminoacyl-tRNA synthetase family. Type 1 subfamily. As to quaternary structure, homodimer.

It localises to the cytoplasm. The enzyme catalyses tRNA(Asx) + L-aspartate + ATP = L-aspartyl-tRNA(Asx) + AMP + diphosphate. Its function is as follows. Aspartyl-tRNA synthetase with relaxed tRNA specificity since it is able to aspartylate not only its cognate tRNA(Asp) but also tRNA(Asn). Reaction proceeds in two steps: L-aspartate is first activated by ATP to form Asp-AMP and then transferred to the acceptor end of tRNA(Asp/Asn). In Methylococcus capsulatus (strain ATCC 33009 / NCIMB 11132 / Bath), this protein is Aspartate--tRNA(Asp/Asn) ligase.